We begin with the raw amino-acid sequence, 231 residues long: Orotidine 5'-phosphate decarboxylase (231 aa).

Substrate is bound by residues aspartate 12, lysine 34, 61–70 (DMKLLDIDNT), threonine 116, arginine 177, glutamine 186, glycine 206, and arginine 207. The Proton donor role is filled by lysine 63.

Belongs to the OMP decarboxylase family. Type 1 subfamily. Homodimer.

The catalysed reaction is orotidine 5'-phosphate + H(+) = UMP + CO2. Its pathway is pyrimidine metabolism; UMP biosynthesis via de novo pathway; UMP from orotate: step 2/2. Catalyzes the decarboxylation of orotidine 5'-monophosphate (OMP) to uridine 5'-monophosphate (UMP). The protein is Orotidine 5'-phosphate decarboxylase of Allorhizobium ampelinum (strain ATCC BAA-846 / DSM 112012 / S4) (Agrobacterium vitis (strain S4)).